The following is an 82-amino-acid chain: Large ribosomal subunit protein bL27 (82 aa).

Residues 1 to 21 form a disordered region; it reads MAHKKGASSSRNGRDSNAKRL.

This sequence belongs to the bacterial ribosomal protein bL27 family.

This is Large ribosomal subunit protein bL27 from Tropheryma whipplei (strain TW08/27) (Whipple's bacillus).